Consider the following 213-residue polypeptide: Serine acetyltransferase (213 aa).

This sequence belongs to the transferase hexapeptide repeat family.

Its subcellular location is the cytoplasm. It carries out the reaction L-serine + acetyl-CoA = O-acetyl-L-serine + CoA. It participates in amino-acid biosynthesis; L-cysteine biosynthesis; L-cysteine from L-serine: step 1/2. In Staphylococcus epidermidis (strain ATCC 35984 / DSM 28319 / BCRC 17069 / CCUG 31568 / BM 3577 / RP62A), this protein is Serine acetyltransferase (cysE).